The sequence spans 298 residues: N-acetylmuramic acid 6-phosphate etherase (298 aa).

An SIS domain is found at 55–218; the sequence is IHAQVSGGGR…STGLMIKSGK (164 aa). The active-site Proton donor is the glutamate 83. Residue glutamate 114 is part of the active site.

It belongs to the GCKR-like family. MurNAc-6-P etherase subfamily. Homodimer.

It catalyses the reaction N-acetyl-D-muramate 6-phosphate + H2O = N-acetyl-D-glucosamine 6-phosphate + (R)-lactate. Its pathway is amino-sugar metabolism; N-acetylmuramate degradation. It participates in amino-sugar metabolism; 1,6-anhydro-N-acetylmuramate degradation. It functions in the pathway cell wall biogenesis; peptidoglycan recycling. In terms of biological role, specifically catalyzes the cleavage of the D-lactyl ether substituent of MurNAc 6-phosphate, producing GlcNAc 6-phosphate and D-lactate. Together with AnmK, is also required for the utilization of anhydro-N-acetylmuramic acid (anhMurNAc) either imported from the medium or derived from its own cell wall murein, and thus plays a role in cell wall recycling. The chain is N-acetylmuramic acid 6-phosphate etherase from Escherichia coli (strain K12 / MC4100 / BW2952).